The primary structure comprises 142 residues: Large ribosomal subunit protein uL11 (142 aa).

This sequence belongs to the universal ribosomal protein uL11 family. Part of the ribosomal stalk of the 50S ribosomal subunit. Interacts with L10 and the large rRNA to form the base of the stalk. L10 forms an elongated spine to which L12 dimers bind in a sequential fashion forming a multimeric L10(L12)X complex. One or more lysine residues are methylated.

Functionally, forms part of the ribosomal stalk which helps the ribosome interact with GTP-bound translation factors. This is Large ribosomal subunit protein uL11 from Yersinia pestis bv. Antiqua (strain Angola).